We begin with the raw amino-acid sequence, 466 residues long: MQLAGKRALVMGLGVHGGGTGVARFLALQGADVTVTDLRGPDDLRASLDALAGLPIRFVLGEHRDDDFRRAEIVVRNPAVPPNSRYLQIARAAGATIEMEMTIFFRLCPGPILGVTGTKGKTTTTLLLGAMLREQFPDTVIAGNLRISALEQLPTITATTPVVLELSSFALEGLGEAGLSPKIACITTIAPDHLDRHGTMEAYILAKEQIWRHQRPGDAVALNADSPIIRAMAVVEQRPDDVVWFASAAHPALAHAGRAAFWQGDELVWRDHRGGRHVICTRDDVQLRGTHNLGNIAAATAAACSFGVAPDHIRRAVQTFPGVEHRLELVRELDGVRYVNDTAATAPEAAIAALRTFDDPIVLIAGGADKQLPFDDLAREIAGRVKAVVLVDGTATPKLQRALRLVDPSVDVCGPFDDFERAVIAARHIAAPGDIVLLSPGCASFGMFRNEFHRGEAFRRIVESFT.

Residue 117-123 (GTKGKTT) coordinates ATP.

It belongs to the MurCDEF family.

It is found in the cytoplasm. The catalysed reaction is UDP-N-acetyl-alpha-D-muramoyl-L-alanine + D-glutamate + ATP = UDP-N-acetyl-alpha-D-muramoyl-L-alanyl-D-glutamate + ADP + phosphate + H(+). It functions in the pathway cell wall biogenesis; peptidoglycan biosynthesis. Its function is as follows. Cell wall formation. Catalyzes the addition of glutamate to the nucleotide precursor UDP-N-acetylmuramoyl-L-alanine (UMA). This chain is UDP-N-acetylmuramoylalanine--D-glutamate ligase, found in Roseiflexus sp. (strain RS-1).